Here is a 560-residue protein sequence, read N- to C-terminus: Thermosome subunit alpha (560 aa).

The span at 535–547 (SEKKGGEGSKEES) shows a compositional bias: basic and acidic residues. Positions 535–560 (SEKKGGEGSKEESGGEGGAGTPSLGD) are disordered.

It belongs to the TCP-1 chaperonin family. As to quaternary structure, forms a heterooligomeric complex of two stacked nine-membered rings; one of alpha and the other of beta subunits. Sometimes called a 'rosettasome'.

The protein resides in the cytoplasm. It catalyses the reaction ATP + H2O = ADP + phosphate + H(+). Its function is as follows. Molecular chaperone; binds unfolded polypeptides in vitro, stimulates protein folding and has ATPase activity. One of the most abundant proteins in the cell at all temperatures. This is Thermosome subunit alpha (thsA) from Saccharolobus shibatae (strain ATCC 51178 / DSM 5389 / JCM 8931 / NBRC 15437 / B12) (Sulfolobus shibatae).